The following is a 124-amino-acid chain: MNNLLLVALGGSIGAVFRYLISIFMIQVFGSSFPFGTLLVNVLGSFLMGVIYALGQMSHISPELKALIGIGLLGALTTFSTFSNETLLLLQEGDWLKATLNVVLNLSLCLFMVYLGQQLVFSRI.

A run of 4 helical transmembrane segments spans residues 4 to 24 (LLLV…ISIF), 35 to 55 (FGTL…YALG), 60 to 80 (ISPE…TTFS), and 102 to 122 (VVLN…LVFS). Na(+) is bound by residues Gly-74 and Thr-77.

It belongs to the fluoride channel Fluc/FEX (TC 1.A.43) family.

The protein localises to the cell inner membrane. It carries out the reaction fluoride(in) = fluoride(out). With respect to regulation, na(+) is not transported, but it plays an essential structural role and its presence is essential for fluoride channel function. Fluoride-specific ion channel. Important for reducing fluoride concentration in the cell, thus reducing its toxicity. This chain is Fluoride-specific ion channel FluC, found in Shewanella baltica (strain OS185).